The primary structure comprises 882 residues: Cadherin-1 (882 aa).

Residues 1–23 (MGPWSRSLSALCCCCRCNPWLCR) form the signal peptide. Positions 24–154 (EPEPCIPGFG…PHHGLRRQKR (131 aa)) are excised as a propeptide. The disordered stretch occupies residues 117–137 (EVSAHHHHHHSHHDSPSGTQT). 5 consecutive Cadherin domains span residues 154-262 (RDWV…KPQF), 263-375 (TQEV…APRF), 376-486 (NPTT…APIF), 487-595 (VPPQ…GPVP), and 594-702 (VPEP…RPAE). The Extracellular portion of the chain corresponds to 155–709 (DWVIPPISCP…PAEAGLQVPA (555 aa)). A glycan (O-linked (Man...) serine) is linked at Ser-280. O-linked (Man...) threonine glycans are attached at residues Thr-285, Thr-358, Thr-470, Thr-472, and Thr-509. An N-linked (GlcNAc...) asparagine glycan is attached at Asn-558. O-linked (Man...) threonine glycosylation is found at Thr-576, Thr-578, and Thr-580. A glycan (N-linked (GlcNAc...) asparagine) is linked at Asn-637. The helical transmembrane segment at 710-730 (ILGILGGILAFLILILLLLLL) threads the bilayer. Topologically, residues 731-882 (VRRRRVVKEP…ADMYGGGEDD (152 aa)) are cytoplasmic. A disordered region spans residues 747–767 (DTRDNVYYYDEEGGGEEDQDF). Residues Tyr-753, Tyr-754, and Tyr-755 each carry the phosphotyrosine; by SRC modification. Residues 755–767 (YDEEGGGEEDQDF) show a composition bias toward acidic residues. Positions 758–769 (EGGGEEDQDFDL) are required for binding CTNND1 and PSEN1. A phosphoserine mark is found at Ser-770, Ser-793, Ser-838, Ser-840, and Ser-846. The interval 811–882 (IDENLKAADS…ADMYGGGEDD (72 aa)) is required for binding alpha, beta and gamma catenins.

In terms of assembly, homodimer; disulfide-linked. Component of an E-cadherin/ catenin adhesion complex composed of at least E-cadherin/CDH1, beta-catenin/CTNNB1 or gamma-catenin/JUP, and potentially alpha-catenin/CTNNA1; the complex is located to adherens junctions. Found in a complex composed of CDH1, RAP1A and PKP3; PKP3 acts as a scaffold protein within the complex, the complex is required for CDH1 localization to mature desmosome cell junctions. Interacts with the TRPV4 and CTNNB1 complex. Interacts with CTNND1. The stable association of CTNNA1 is controversial as CTNNA1 was shown not to bind to F-actin when assembled in the complex. Alternatively, the CTNNA1-containing complex may be linked to F-actin by other proteins such as LIMA1. Interaction with PSEN1, cleaves CDH1 resulting in the disassociation of cadherin-based adherens junctions (CAJs). Interacts with AJAP1 and DLGAP5. Interacts with TBC1D2. Interacts with CAV1. Interacts with PIP5K1C. Interacts with RAB8B. Interacts with DDR1; this stabilizes CDH1 at the cell surface and inhibits its internalization. Interacts with RAPGEF2. Interacts with KLRG1. Forms a ternary complex composed of ADAM10, CADH1 and EPHA4; within the complex, CADH1 is cleaved by ADAM10 which disrupts adherens junctions. Interacts with SPEF1. Interacts with CTNNB1 and PKP2. Interacts with AMOTL2; the interaction may facilitate binding of radial actin fibers to cell junction complexes. Interacts with DSG3; the interaction is required for CDH1 localization to developing adherens junctions. In terms of processing, during apoptosis or with calcium influx, cleaved by a membrane-bound metalloproteinase (ADAM10), PS1/gamma-secretase and caspase-3. Processing by the metalloproteinase, induced by calcium influx, causes disruption of cell-cell adhesion and the subsequent release of beta-catenin into the cytoplasm. The residual membrane-tethered cleavage product is rapidly degraded via an intracellular proteolytic pathway. Cleavage by caspase-3 releases the cytoplasmic tail resulting in disintegration of the actin microfilament system. The gamma-secretase-mediated cleavage promotes disassembly of adherens junctions. During development of the cochlear organ of Corti, cleavage by ADAM10 at adherens junctions promotes pillar cell separation. N-glycosylation at Asn-637 is essential for expression, folding and trafficking. Addition of bisecting N-acetylglucosamine by MGAT3 modulates its cell membrane location. Post-translationally, ubiquitinated by a SCF complex containing SKP2, which requires prior phosphorylation by CK1/CSNK1A1. Ubiquitinated by CBLL1/HAKAI, requires prior phosphorylation at Tyr-754. In terms of processing, O-glycosylated. O-manosylated by TMTC1, TMTC2, TMTC3 or TMTC4. Thr-285 and Thr-509 are O-mannosylated by TMTC2 or TMTC4 but not TMTC1 or TMTC3.

Its subcellular location is the cell junction. The protein localises to the adherens junction. The protein resides in the cell membrane. It localises to the endosome. It is found in the golgi apparatus. Its subcellular location is the trans-Golgi network. The protein localises to the cytoplasm. The protein resides in the desmosome. In terms of biological role, cadherins are calcium-dependent cell adhesion proteins. They preferentially interact with themselves in a homophilic manner in connecting cells; cadherins may thus contribute to the sorting of heterogeneous cell types. CDH1 is involved in mechanisms regulating cell-cell adhesions, mobility and proliferation of epithelial cells. Promotes organization of radial actin fiber structure and cellular response to contractile forces, via its interaction with AMOTL2 which facilitates anchoring of radial actin fibers to CDH1 junction complexes at the cell membrane. Plays a role in the early stages of desmosome cell-cell junction formation via facilitating the recruitment of DSG2 and DSP to desmosome plaques. Has a potent invasive suppressor role. It is a ligand for integrin alpha-E/beta-7. Functionally, E-Cad/CTF2 promotes non-amyloidogenic degradation of Abeta precursors. Has a strong inhibitory effect on APP C99 and C83 production. The sequence is that of Cadherin-1 (CDH1) from Bos taurus (Bovine).